Reading from the N-terminus, the 262-residue chain is Small ribosomal subunit protein uS2 (262 aa).

Positions 224 to 262 (GKQGQDDAQQETADDNAANETVSEDSLKNLKNSVEGKED) are disordered.

It belongs to the universal ribosomal protein uS2 family.

The polypeptide is Small ribosomal subunit protein uS2 (Limosilactobacillus reuteri (strain DSM 20016) (Lactobacillus reuteri)).